Reading from the N-terminus, the 341-residue chain is L-threonine 3-dehydrogenase (341 aa).

Cysteine 38 is a binding site for Zn(2+). Residues threonine 40 and histidine 43 each act as charge relay system in the active site. The Zn(2+) site is built by histidine 63, glutamate 64, cysteine 93, cysteine 96, cysteine 99, and cysteine 107. NAD(+) contacts are provided by residues isoleucine 175, aspartate 195, arginine 200, 262–264 (LGI), and 286–287 (IY).

The protein belongs to the zinc-containing alcohol dehydrogenase family. Homotetramer. It depends on Zn(2+) as a cofactor.

The protein localises to the cytoplasm. It catalyses the reaction L-threonine + NAD(+) = (2S)-2-amino-3-oxobutanoate + NADH + H(+). It participates in amino-acid degradation; L-threonine degradation via oxydo-reductase pathway; glycine from L-threonine: step 1/2. Its function is as follows. Catalyzes the NAD(+)-dependent oxidation of L-threonine to 2-amino-3-ketobutyrate. This chain is L-threonine 3-dehydrogenase, found in Escherichia coli O139:H28 (strain E24377A / ETEC).